A 387-amino-acid chain; its full sequence is Galactokinase (387 aa).

Residue 33-36 (EHID) coordinates substrate. ATP-binding positions include serine 67 and 124–130 (GAGLSSS). Positions 130 and 162 each coordinate Mg(2+). Catalysis depends on aspartate 174, which acts as the Proton acceptor. Residue tyrosine 224 participates in substrate binding.

Belongs to the GHMP kinase family. GalK subfamily.

It localises to the cytoplasm. It carries out the reaction alpha-D-galactose + ATP = alpha-D-galactose 1-phosphate + ADP + H(+). It participates in carbohydrate metabolism; galactose metabolism. Functionally, catalyzes the transfer of the gamma-phosphate of ATP to D-galactose to form alpha-D-galactose-1-phosphate (Gal-1-P). The polypeptide is Galactokinase (Clostridium perfringens (strain SM101 / Type A)).